The chain runs to 415 residues: Phosphoribosylamine--glycine ligase (415 aa).

The ATP-grasp domain maps to 108–311 (KKIMKKYNIP…LMQHIIDLDE (204 aa)). 134 to 191 (IENCELPVVVKKDGLAAGKGVIIADTIEAARSAIEIMYGDEEEGTVVFETFLEGEEFS) provides a ligand contact to ATP. The Mg(2+) site is built by Glu281 and Asn283.

It belongs to the GARS family. The cofactor is Mg(2+). It depends on Mn(2+) as a cofactor.

It catalyses the reaction 5-phospho-beta-D-ribosylamine + glycine + ATP = N(1)-(5-phospho-beta-D-ribosyl)glycinamide + ADP + phosphate + H(+). It functions in the pathway purine metabolism; IMP biosynthesis via de novo pathway; N(1)-(5-phospho-D-ribosyl)glycinamide from 5-phospho-alpha-D-ribose 1-diphosphate: step 2/2. The protein is Phosphoribosylamine--glycine ligase of Staphylococcus aureus (strain Mu50 / ATCC 700699).